A 423-amino-acid chain; its full sequence is Tyrosine--tRNA ligase (423 aa).

Position 35 (Y35) interacts with L-tyrosine. A 'HIGH' region motif is present at residues 40–49 (PTAPSLHAGH). Y170 and Q174 together coordinate L-tyrosine. The 'KMSKS' region signature appears at 230–234 (KFGKS). K233 contacts ATP. The region spanning 355–412 (DLITDLLVATGLSASKGAARRTIAEGGVSVNNMKIDSDEWTPQASDFLHGRWLVLRRG) is the S4 RNA-binding domain.

This sequence belongs to the class-I aminoacyl-tRNA synthetase family. TyrS type 1 subfamily. Homodimer.

It localises to the cytoplasm. It carries out the reaction tRNA(Tyr) + L-tyrosine + ATP = L-tyrosyl-tRNA(Tyr) + AMP + diphosphate + H(+). Its function is as follows. Catalyzes the attachment of tyrosine to tRNA(Tyr) in a two-step reaction: tyrosine is first activated by ATP to form Tyr-AMP and then transferred to the acceptor end of tRNA(Tyr). This chain is Tyrosine--tRNA ligase, found in Mycobacterium sp. (strain KMS).